The chain runs to 373 residues: XK-related protein 9 (373 aa).

8 consecutive transmembrane segments (helical) span residues Phe8–Leu28, Tyr38–Phe58, Met166–Leu186, Leu206–Val226, Val230–His250, Ser256–Phe276, Val295–Ser315, and Phe318–Val338.

This sequence belongs to the XK family. In terms of processing, undergoes proteolytic processing by caspase-3 (CASP3), caspase-6 (CASP6) and caspase-7 (CASP7) to generate the XK-related protein 9, processed form, leading to its activation. Highly expressed in the small intestines; weakly expressed in the pancreas, liver, stomach, and large intestines.

The protein localises to the cell membrane. It carries out the reaction a 1,2-diacyl-sn-glycero-3-phospho-L-serine(in) = a 1,2-diacyl-sn-glycero-3-phospho-L-serine(out). Activated upon caspase cleavage to generate the XK-related protein 9, processed form. Does not act prior the onset of apoptosis. Functionally, phospholipid scramblase that promotes phosphatidylserine exposure on apoptotic cell surface. Phosphatidylserine is a specific marker only present at the surface of apoptotic cells and acts as a specific signal for engulfment. The polypeptide is XK-related protein 9 (Mus musculus (Mouse)).